The following is a 510-amino-acid chain: Hexose carrier protein HEX6 (510 aa).

At 1 to 22 the chain is on the cytoplasmic side; sequence MAAGLAITSEGGQYNGRMTSFV. A run of 12 helical transmembrane segments spans residues 23 to 43, 83 to 103, 118 to 128, 140 to 160, 169 to 189, 202 to 222, 284 to 304, 325 to 345, 349 to 369, 382 to 402, 428 to 448, and 451 to 471; these read ALSCMMAAMGGVIFGYDIGVS, SFTSSLYVAGLVASFFASSVT, VFLAXAALGGA, VLLGVGVGFANQAVPLYLSEM, INNGFQFSVGIGALSANLINY, ISLAMAAVPAAILTFGALFLP, LVMAVAIPFFQQVTGINVIAF, IVTGLVGSASTFISMLIVDKL, ALFIFGGVQMFVAQIMVGSIM, GYAYIVLILICIYVAGFGWSW, AVSFLFTFVVAQTFLSMLCHF, and GIFFFFGGWVVVMTAFVHFLL. The Cytoplasmic portion of the chain corresponds to 472–510; the sequence is PETKKVPIEKMDIVWRDHWFWKKIIGEEAAEENNKMEAA.

It belongs to the major facilitator superfamily. Sugar transporter (TC 2.A.1.1) family.

It localises to the membrane. Functionally, active uptake of hexoses. Probable glucose/hydrogen symport. The polypeptide is Hexose carrier protein HEX6 (HEX6) (Ricinus communis (Castor bean)).